The primary structure comprises 968 residues: RNA polymerase-associated protein RapA (968 aa).

In terms of domain architecture, Helicase ATP-binding spans 164–334 (DVGRRHAPRV…FARLRLLDPN (171 aa)). ATP is bound at residue 177-184 (DEVGLGKT). Residues 280–283 (DEAH) carry the DEAH box motif. The region spanning 490-685 (RVEWLMGYLT…ALKAQLEQGR (196 aa)) is the Helicase C-terminal domain.

This sequence belongs to the SNF2/RAD54 helicase family. RapA subfamily. As to quaternary structure, interacts with the RNAP. Has a higher affinity for the core RNAP than for the holoenzyme. Its ATPase activity is stimulated by binding to RNAP.

Transcription regulator that activates transcription by stimulating RNA polymerase (RNAP) recycling in case of stress conditions such as supercoiled DNA or high salt concentrations. Probably acts by releasing the RNAP, when it is trapped or immobilized on tightly supercoiled DNA. Does not activate transcription on linear DNA. Probably not involved in DNA repair. The sequence is that of RNA polymerase-associated protein RapA from Salmonella choleraesuis (strain SC-B67).